Consider the following 633-residue polypeptide: DNA topoisomerase 1 (633 aa).

The 110-residue stretch at 6 to 115 (KKYIVVESPA…KNRIVFSEIT (110 aa)) folds into the Toprim domain. Residues glutamate 12 and aspartate 84 each contribute to the Mg(2+) site. One can recognise a Topo IA-type catalytic domain in the interval 130 to 543 (DMKKVRAQLA…EFYESFSSVF (414 aa)). Residues 164-169 (SAGRVQ) form an interaction with DNA region. Residue tyrosine 288 is the O-(5'-phospho-DNA)-tyrosine intermediate of the active site. 2 disulfide bridges follow: cysteine 559–cysteine 578 and cysteine 561–cysteine 580. The segment at 559–580 (CSCGKEMRLSFGKYGFYLKCEC) adopts a C4-type zinc-finger fold. The disordered stretch occupies residues 601–633 (LGRKDSESGSPDGRSVEGKGNLSEKRRKGKKGS).

The protein belongs to the type IA topoisomerase family. Monomer. Requires Mg(2+) as cofactor.

It carries out the reaction ATP-independent breakage of single-stranded DNA, followed by passage and rejoining.. Functionally, releases the supercoiling and torsional tension of DNA, which is introduced during the DNA replication and transcription, by transiently cleaving and rejoining one strand of the DNA duplex. Introduces a single-strand break via transesterification at a target site in duplex DNA. The scissile phosphodiester is attacked by the catalytic tyrosine of the enzyme, resulting in the formation of a DNA-(5'-phosphotyrosyl)-enzyme intermediate and the expulsion of a 3'-OH DNA strand. The free DNA strand then undergoes passage around the unbroken strand, thus removing DNA supercoils. Finally, in the religation step, the DNA 3'-OH attacks the covalent intermediate to expel the active-site tyrosine and restore the DNA phosphodiester backbone. In Thermotoga maritima (strain ATCC 43589 / DSM 3109 / JCM 10099 / NBRC 100826 / MSB8), this protein is DNA topoisomerase 1.